The following is a 346-amino-acid chain: Selenide, water dikinase (346 aa).

Residue selenocysteine 17 is part of the active site. Residue selenocysteine 17 is a non-standard amino acid, selenocysteine. Residues lysine 20 and 47–49 contribute to the ATP site; that span reads TSD. Aspartate 50 serves as a coordination point for Mg(2+). ATP is bound by residues aspartate 67, aspartate 90, and 138 to 140; that span reads GHT. Aspartate 90 provides a ligand contact to Mg(2+). Residue aspartate 226 coordinates Mg(2+).

It belongs to the selenophosphate synthase 1 family. Class I subfamily. Homodimer. It depends on Mg(2+) as a cofactor.

It catalyses the reaction hydrogenselenide + ATP + H2O = selenophosphate + AMP + phosphate + 2 H(+). Its function is as follows. Synthesizes selenophosphate from selenide and ATP. The chain is Selenide, water dikinase from Trichlorobacter lovleyi (strain ATCC BAA-1151 / DSM 17278 / SZ) (Geobacter lovleyi).